A 524-amino-acid chain; its full sequence is Zinc finger CCCH domain-containing protein 37 (524 aa).

The tract at residues 19–39 is disordered; the sequence is ASTVSPAPPPPQQPLPPKTGL. Over residues 24–35 the composition is skewed to pro residues; that stretch reads PAPPPPQQPLPP. C3H1-type zinc fingers lie at residues 174 to 202, 225 to 253, and 268 to 296; these read RAGEKDCTHYMQTRTCKFGESCRFDHPIW, RPGEPDCPYYIKTQRCKYGSKCKFNHPRE, and RPSEPMCTFYMKTGKCKFGLSCKFHHPKD. Residues 300–319 are disordered; sequence PSSSQDIGSSVGLTSEPDAT. C3H1-type zinc fingers lie at residues 340 to 368, 420 to 448, and 473 to 501; these read RSGEVDCPFYLKTGSCKYGATCRYNHPER, RPGQSECDYYMKTGECKFGERCKFHHPAD, and REGALNCPYYMKTGTCKYGATCKFDHPPP. The disordered stretch occupies residues 505–524; sequence MAKTTSEADAAGATNTDTTQ. The segment covering 512–524 has biased composition (low complexity); the sequence is ADAAGATNTDTTQ.

In terms of assembly, interacts with HEN4. Interacts with FLK and PEP. In terms of tissue distribution, highly expressed in inflorescences, at intermediate levels in leaves and stems and at lower levels in roots.

The protein localises to the nucleus speckle. Its function is as follows. Involved in flower development. Functions in floral reproductive organ identity by binding AGAMOUS (AG) pre-mRNA and promoting its processing. Functions in association with HUA2 and HEN4. This Arabidopsis thaliana (Mouse-ear cress) protein is Zinc finger CCCH domain-containing protein 37 (HUA1).